Consider the following 158-residue polypeptide: Cyclic pyranopterin monophosphate synthase (158 aa).

Substrate is bound by residues 74 to 76 (MCH) and 112 to 113 (ME). Asp-127 is an active-site residue.

This sequence belongs to the MoaC family. As to quaternary structure, homohexamer; trimer of dimers.

It carries out the reaction (8S)-3',8-cyclo-7,8-dihydroguanosine 5'-triphosphate = cyclic pyranopterin phosphate + diphosphate. The protein operates within cofactor biosynthesis; molybdopterin biosynthesis. Its function is as follows. Catalyzes the conversion of (8S)-3',8-cyclo-7,8-dihydroguanosine 5'-triphosphate to cyclic pyranopterin monophosphate (cPMP). This is Cyclic pyranopterin monophosphate synthase from Thermoanaerobacter sp. (strain X514).